We begin with the raw amino-acid sequence, 382 residues long: Galactokinase (382 aa).

Position 34-37 (34-37 (EHTD)) interacts with substrate. 124 to 130 (GAGLSSS) contributes to the ATP binding site. Serine 130 and glutamate 162 together coordinate Mg(2+). Catalysis depends on aspartate 174, which acts as the Proton acceptor. Position 223 (tyrosine 223) interacts with substrate.

It belongs to the GHMP kinase family. GalK subfamily.

It is found in the cytoplasm. It catalyses the reaction alpha-D-galactose + ATP = alpha-D-galactose 1-phosphate + ADP + H(+). It functions in the pathway carbohydrate metabolism; galactose metabolism. Its function is as follows. Catalyzes the transfer of the gamma-phosphate of ATP to D-galactose to form alpha-D-galactose-1-phosphate (Gal-1-P). This Aeromonas hydrophila subsp. hydrophila (strain ATCC 7966 / DSM 30187 / BCRC 13018 / CCUG 14551 / JCM 1027 / KCTC 2358 / NCIMB 9240 / NCTC 8049) protein is Galactokinase.